The following is a 283-amino-acid chain: MTLPAFITWDFDPVLFTLFGHPIVWYGLLFALGLIILGPWIEKKMWEHEKLDSKWFESLAVYVFVGTIVGARLGHVLFYDPAYYLANPAKIFVTWEGGLASHGGTIGIIIACWLYSRRVTRKSILWVLDRLAVPTGIVAAMIRLGNLTNSEIFGRPTTLPWGFRFIRSEEYRHLVPNMDMGCHPTQIYEALCYLAVFALCMWLYWKRDAARRYSGLIVGVFLTGIFLSRFIIERIKIVQEPWELKLIESVGLNMGQLLSIPFVLAGIWLIIRAVKNPITQKLS.

Transmembrane regions (helical) follow at residues 18–38 (LFGH…IILG), 59–79 (LAVY…VLFY), 91–111 (IFVT…IIIA), 124–144 (ILWV…MIRL), 185–205 (TQIY…WLYW), 213–233 (YSGL…FIIE), and 251–271 (GLNM…WLII). Position 143 (arginine 143) interacts with a 1,2-diacyl-sn-glycero-3-phospho-(1'-sn-glycerol).

It belongs to the Lgt family.

It localises to the cell inner membrane. It catalyses the reaction L-cysteinyl-[prolipoprotein] + a 1,2-diacyl-sn-glycero-3-phospho-(1'-sn-glycerol) = an S-1,2-diacyl-sn-glyceryl-L-cysteinyl-[prolipoprotein] + sn-glycerol 1-phosphate + H(+). The protein operates within protein modification; lipoprotein biosynthesis (diacylglyceryl transfer). In terms of biological role, catalyzes the transfer of the diacylglyceryl group from phosphatidylglycerol to the sulfhydryl group of the N-terminal cysteine of a prolipoprotein, the first step in the formation of mature lipoproteins. This is Phosphatidylglycerol--prolipoprotein diacylglyceryl transferase from Porphyromonas gingivalis (strain ATCC 33277 / DSM 20709 / CIP 103683 / JCM 12257 / NCTC 11834 / 2561).